A 269-amino-acid polypeptide reads, in one-letter code: Regulatory protein RecX (269 aa).

This sequence belongs to the RecX family.

The protein resides in the cytoplasm. Modulates RecA activity. The protein is Regulatory protein RecX of Listeria monocytogenes serotype 4b (strain CLIP80459).